A 290-amino-acid chain; its full sequence is Proteasome subunit beta (290 aa).

The propeptide at Met-1–Gly-58 is removed in mature form; by autocatalysis. The active-site Nucleophile is Thr-59.

Belongs to the peptidase T1B family. The 20S proteasome core is composed of 14 alpha and 14 beta subunits that assemble into four stacked heptameric rings, resulting in a barrel-shaped structure. The two inner rings, each composed of seven catalytic beta subunits, are sandwiched by two outer rings, each composed of seven alpha subunits. The catalytic chamber with the active sites is on the inside of the barrel. Has a gated structure, the ends of the cylinder being occluded by the N-termini of the alpha-subunits. Is capped by the proteasome-associated ATPase, ARC.

Its subcellular location is the cytoplasm. It carries out the reaction Cleavage of peptide bonds with very broad specificity.. The protein operates within protein degradation; proteasomal Pup-dependent pathway. Its activity is regulated as follows. The formation of the proteasomal ATPase ARC-20S proteasome complex, likely via the docking of the C-termini of ARC into the intersubunit pockets in the alpha-rings, may trigger opening of the gate for substrate entry. Interconversion between the open-gate and close-gate conformations leads to a dynamic regulation of the 20S proteasome proteolysis activity. In terms of biological role, component of the proteasome core, a large protease complex with broad specificity involved in protein degradation. The polypeptide is Proteasome subunit beta (Acidothermus cellulolyticus (strain ATCC 43068 / DSM 8971 / 11B)).